The sequence spans 190 residues: ADP-ribosylation factor F (190 aa).

GTP-binding positions include 34–40 (DGAGKST), 75–79 (DIGGQ), and 136–139 (NKQD).

Belongs to the small GTPase superfamily. Arf family.

It is found in the golgi apparatus. Functionally, GTP-binding protein that may be involved in protein trafficking. May modulate vesicle budding and uncoating within the Golgi apparatus. This chain is ADP-ribosylation factor F (arrF), found in Dictyostelium discoideum (Social amoeba).